We begin with the raw amino-acid sequence, 347 residues long: Protein phosphatase 1 regulatory subunit 3G (347 aa).

The tract at residues 1–77 (MDPSGEQLHR…ELQEYRRSRA (77 aa)) is disordered. Residues 13-22 (ASSSTSSGDP) are compositionally biased toward polar residues. Ser-81 carries the post-translational modification Phosphoserine. The CBM21 domain maps to 200–339 (EERLRRQRVC…NNEGANYTLR (140 aa)). Residues 258 to 286 (DPESVEPLPPLQSGDSGSKAEDSEEGPGT) form a disordered region.

In terms of biological role, glycogen-targeting subunit for protein phosphatase 1 (PP1). Involved in the regulation of hepatic glycogenesis in a manner coupled to the fasting-feeding cycle and distinct from other glycogen-targeting subunits. The polypeptide is Protein phosphatase 1 regulatory subunit 3G (Ppp1r3g) (Mus musculus (Mouse)).